Consider the following 92-residue polypeptide: Small ribosomal subunit protein uS19 (92 aa).

It belongs to the universal ribosomal protein uS19 family.

Its function is as follows. Protein S19 forms a complex with S13 that binds strongly to the 16S ribosomal RNA. The chain is Small ribosomal subunit protein uS19 from Buchnera aphidicola subsp. Schizaphis graminum (strain Sg).